The chain runs to 375 residues: o-succinylbenzoate synthase (375 aa).

Residue Lys166 is the Proton donor of the active site. Mg(2+) contacts are provided by Asp191, Glu216, and Asp241. Lys265 acts as the Proton acceptor in catalysis.

It belongs to the mandelate racemase/muconate lactonizing enzyme family. MenC type 2 subfamily. In terms of assembly, homotetramer. It depends on a divalent metal cation as a cofactor.

It carries out the reaction (1R,6R)-6-hydroxy-2-succinyl-cyclohexa-2,4-diene-1-carboxylate = 2-succinylbenzoate + H2O. It catalyses the reaction N-acetyl-D-methionine = N-acetyl-L-methionine. It participates in quinol/quinone metabolism; 1,4-dihydroxy-2-naphthoate biosynthesis; 1,4-dihydroxy-2-naphthoate from chorismate: step 4/7. It functions in the pathway quinol/quinone metabolism; menaquinone biosynthesis. Converts 2-succinyl-6-hydroxy-2,4-cyclohexadiene-1-carboxylate (SHCHC) to 2-succinylbenzoate (OSB). Also acts as a N-succinylamino acid racemase (NSAR) that catalyzes the racemization of N-succinyl-D/L-phenylalanine. Can catalyze the racemization of a broad range of N-acylamino acids, including N-acetyl-D-methionine, N-formyl-D/L-methionine, N-formyl-D/L-norleucine, N-formyl-D/L-aminobutyric acid, N-formyl-D/L-norvaline, N-formyl-D/L-homophenylalanine, N-carbamoyl-D-methionine and N-carbamoyl-D-norleucine. May be a bifunctional enzyme involved in menaquinone biosynthesis and in an irreversible pathway for the conversion of D- to L-amino acids, thereby facilitating the survival and/or growth of the organism. This chain is o-succinylbenzoate synthase, found in Geobacillus stearothermophilus (Bacillus stearothermophilus).